We begin with the raw amino-acid sequence, 381 residues long: Putative heat shock protein HSP 90-beta 2 (381 aa).

Asn-46, Asp-88, and Lys-107 together coordinate ATP. A compositionally biased stretch (basic and acidic residues) spans 145-174 (KEISDGKAEEEKGEKEEENKDDEEKPKIED). Residues 145–192 (KEISDGKAEEEKGEKEEENKDDEEKPKIEDVGSDEEDDSGKDKKKKTK) are disordered. Ser-177 bears the Phosphoserine mark. Residues 315-347 (ELPEDGEEKKRMEERKAKFENLCKFMKETLDKK) are a coiled coil.

It belongs to the heat shock protein 90 family. As to quaternary structure, homodimer.

It localises to the cytoplasm. Its function is as follows. Putative molecular chaperone that may promote the maturation, structural maintenance and proper regulation of specific target proteins. This is Putative heat shock protein HSP 90-beta 2 (HSP90AB2P) from Homo sapiens (Human).